The primary structure comprises 400 residues: MGRAKKVVLAYSGGVDTSVCIPYLKHEWGVDEVITLAADLGQGDELGPIQAKALKSGAVESLVEDATAEFVTDYAFKAIKANALYESRYPLSTALARPLIAKLLVEAAEKYGADAVAHGCTAKGNDQVRFDLGILALNPTLKVLAPAREWKMSREQTIAYGEKFGLDFPVKKSSPFSIDRNLLGRSIEAGPLEDPMTEPPEEIYLMTKAIADTPDTPEYVEIGFEKGLPVSLNGQTLDPVTLISQLNDVVGKHGVGRIDMIENRVVGIKSREIYEAPALLVLIDAHRDLESLTLTSDVTHYKKGVEETYSHLIYRGLWYSPLKESLDAFIDHTQERVNGTVRIKLFKGNANIVGRQSDYSIYSPNLATYGEDDHFDHKAAEGFIYIWGLPTRVWAEKTKG.

ATP-binding positions include 10–18 (AYSGGVDTS) and alanine 38. Position 89 (tyrosine 89) interacts with L-citrulline. Glycine 119 is a binding site for ATP. L-aspartate-binding residues include threonine 121, asparagine 125, and aspartate 126. Position 125 (asparagine 125) interacts with L-citrulline. L-citrulline contacts are provided by arginine 129, serine 177, serine 186, glutamate 262, and tyrosine 274.

It belongs to the argininosuccinate synthase family. Type 1 subfamily. Homotetramer.

The protein resides in the cytoplasm. It catalyses the reaction L-citrulline + L-aspartate + ATP = 2-(N(omega)-L-arginino)succinate + AMP + diphosphate + H(+). Its pathway is amino-acid biosynthesis; L-arginine biosynthesis; L-arginine from L-ornithine and carbamoyl phosphate: step 2/3. The sequence is that of Argininosuccinate synthase from Crocosphaera subtropica (strain ATCC 51142 / BH68) (Cyanothece sp. (strain ATCC 51142)).